A 746-amino-acid chain; its full sequence is Steroid receptor seven-up, isoform A (746 aa).

A disordered region spans residues 38-191 (PPHSAWHEPP…HSQSSNSGSQ (154 aa)). Low complexity predominate over residues 56–68 (AASAGPGTTTGSV). Positions 83–101 (QQSAVIKQDLSCPSLNQAG) are enriched in polar residues. The span at 122–141 (GSAGGHHSGSGSGSGSGVNP) shows a compositional bias: gly residues. Residues 158–170 (MLTSIKGQPTGCG) show a composition bias toward polar residues. Residues 171–191 (STTPSSQANSSHSQSSNSGSQ) are compositionally biased toward low complexity. Residues 197–272 (NIECVVCGDK…MGMRREAVQR (76 aa)) constitute a DNA-binding region (nuclear receptor). NR C4-type zinc fingers lie at residues 200-220 (CVVC…CEGC) and 236-260 (CRGS…LKKC). One can recognise an NR LBD domain in the interval 307-556 (YLSSYISLLL…PLVPSAGSAF (250 aa)). Positions 579 to 645 (QATPPSSGGG…APAPVPTSSV (67 aa)) are disordered. Residues 592 to 605 (GHNNSSGLGASLPT) show a composition bias toward polar residues. Positions 606–645 (QSQSGSSSRNLTASPLSTSLATAPAPASASAPAPVPTSSV) are enriched in low complexity.

Belongs to the nuclear hormone receptor family. NR2 subfamily. Expressed in several embryonic tissues; dorsal vessel, oenocyte and fat body. CNS expression is dynamic and confined to temporally restricted subsections of the NB lineage; expressed in many NB and GMCs, but only a small number of neurons.

Its subcellular location is the nucleus. In terms of biological role, receptor that is required in photoreceptors R1, R3, R4 and R6 during eye development; generation of the ganglion mother cell-2 (GMC-2) fate in the nb7-3 lineage, coinciding with the transition in the expression of HB to KR in the neuroblasts (NBs). This chain is Steroid receptor seven-up, isoform A (svp), found in Drosophila melanogaster (Fruit fly).